The following is an 81-amino-acid chain: Large ribosomal subunit protein uL24 (81 aa).

The protein belongs to the universal ribosomal protein uL24 family. Part of the 50S ribosomal subunit.

Functionally, one of two assembly initiator proteins, it binds directly to the 5'-end of the 23S rRNA, where it nucleates assembly of the 50S subunit. In terms of biological role, one of the proteins that surrounds the polypeptide exit tunnel on the outside of the subunit. The sequence is that of Large ribosomal subunit protein uL24 from Chloroherpeton thalassium (strain ATCC 35110 / GB-78).